Reading from the N-terminus, the 420-residue chain is Serine hydroxymethyltransferase (420 aa).

(6S)-5,6,7,8-tetrahydrofolate is bound by residues leucine 117 and 121–123 (GHL). N6-(pyridoxal phosphate)lysine is present on lysine 226.

This sequence belongs to the SHMT family. In terms of assembly, homodimer. It depends on pyridoxal 5'-phosphate as a cofactor.

It localises to the cytoplasm. The enzyme catalyses (6R)-5,10-methylene-5,6,7,8-tetrahydrofolate + glycine + H2O = (6S)-5,6,7,8-tetrahydrofolate + L-serine. It participates in one-carbon metabolism; tetrahydrofolate interconversion. It functions in the pathway amino-acid biosynthesis; glycine biosynthesis; glycine from L-serine: step 1/1. Its function is as follows. Catalyzes the reversible interconversion of serine and glycine with tetrahydrofolate (THF) serving as the one-carbon carrier. This reaction serves as the major source of one-carbon groups required for the biosynthesis of purines, thymidylate, methionine, and other important biomolecules. Also exhibits THF-independent aldolase activity toward beta-hydroxyamino acids, producing glycine and aldehydes, via a retro-aldol mechanism. The protein is Serine hydroxymethyltransferase of Rhodopirellula baltica (strain DSM 10527 / NCIMB 13988 / SH1).